Here is a 163-residue protein sequence, read N- to C-terminus: Peptide methionine sulfoxide reductase MsrA (163 aa).

Cysteine 10 is an active-site residue.

Belongs to the MsrA Met sulfoxide reductase family.

It catalyses the reaction L-methionyl-[protein] + [thioredoxin]-disulfide + H2O = L-methionyl-(S)-S-oxide-[protein] + [thioredoxin]-dithiol. It carries out the reaction [thioredoxin]-disulfide + L-methionine + H2O = L-methionine (S)-S-oxide + [thioredoxin]-dithiol. Its function is as follows. Has an important function as a repair enzyme for proteins that have been inactivated by oxidation. Catalyzes the reversible oxidation-reduction of methionine sulfoxide in proteins to methionine. The chain is Peptide methionine sulfoxide reductase MsrA from Vesicomyosocius okutanii subsp. Calyptogena okutanii (strain HA).